A 763-amino-acid polypeptide reads, in one-letter code: F-box protein SKP2 (763 aa).

Residues 54–100 (KSSLMCLPTKVLLLILRTLDFNTLVTLCQVNSRFYNLITNEFLFQNV) enclose the F-box domain. A Phosphothreonine modification is found at T594.

As to quaternary structure, interacts with SKP1. Component of the probable SCF(SKP2) complex containing CDC53, SKP1, RBX1 and SKP2. May interact with ribosomes.

Its subcellular location is the cytoplasm. It functions in the pathway protein modification; protein ubiquitination. Functionally, substrate recognition component of a SCF (SKP1-CUL1-F-box protein) E3 ubiquitin-protein ligase complex which mediates the ubiquitination and subsequent proteasomal degradation of target proteins. Probably recognizes and binds to phosphorylated target proteins. Regulates protein levels of sulfur metabolism enzymes. The SCF(SKP2) complex may regulate some transcription factors or regulators of cysteine and methionine biosynthesis. The polypeptide is F-box protein SKP2 (SKP2) (Saccharomyces cerevisiae (strain ATCC 204508 / S288c) (Baker's yeast)).